Here is a 588-residue protein sequence, read N- to C-terminus: Probable G-protein coupled receptor 162 (588 aa).

Residues 1 to 17 are Extracellular-facing; sequence MARGGAGAEEASLRSNA. The chain crosses the membrane as a helical span at residues 18–38; the sequence is LSWLACGLLALLANAWIILSI. Over 39–49 the chain is Cytoplasmic; it reads SAKQQKHKPLE. The chain crosses the membrane as a helical span at residues 50 to 70; sequence LLLCFLAGTHILMAAVPLTTF. Residues 71-91 lie on the Extracellular side of the membrane; the sequence is AVVQLRRQASSDYDWNESICK. An N-linked (GlcNAc...) asparagine glycan is attached at asparagine 86. The chain crosses the membrane as a helical span at residues 92-112; that stretch reads VFVSTYYTLALATCFTVASLS. The Cytoplasmic segment spans residues 113–133; that stretch reads YHRMWMVRWPVNYRLSNAKKQ. Residues 134–154 traverse the membrane as a helical segment; sequence ALHAVMGIWMVSFILSTLPSI. Residues 155–174 lie on the Extracellular side of the membrane; the sequence is GWHNNGERYYARGCQFIVSK. Residues 175–195 traverse the membrane as a helical segment; the sequence is IGLGFGVCFSLLLLGGIVMGL. Over 196 to 275 the chain is Cytoplasmic; it reads VCVAITFYQT…SLQVTNLVSA (80 aa). The helical transmembrane segment at 276–296 threads the bilayer; sequence IVFLYDSLTGVPILVVSFFSL. Residues 297-303 lie on the Extracellular side of the membrane; that stretch reads KSDSAPP. A helical transmembrane segment spans residues 304–324; sequence WMVLAVLWCSMAQTLLLPSFI. The Cytoplasmic segment spans residues 325–588; sequence WSCERYRADV…GNPIFPQLTL (264 aa). Phosphoserine is present on residues serine 413 and serine 435. 2 disordered regions span residues 445-474 and 511-550; these read QSRALGGPPEYLGQRHRLEDEEDEEEAEGG and ETPLPSPTASPGHSPRRPRPLGLSPRRLSLGSPESRAVGL. Residues 530-546 are compositionally biased toward low complexity; that stretch reads PLGLSPRRLSLGSPESR.

It belongs to the G-protein coupled receptor 1 family.

The protein resides in the cell membrane. Orphan receptor. This is Probable G-protein coupled receptor 162 (GPR162) from Homo sapiens (Human).